Reading from the N-terminus, the 356-residue chain is Syntaxin-7A (356 aa).

At 1–333 the chain is on the cytoplasmic side; it reads MYNNNNNFGG…NQKSSRNKMC (333 aa). 2 stretches are compositionally biased toward low complexity: residues 32-74 and 207-224; these read NNNN…FDNN and NNNSNNNNQNNHFLNNQQ. 2 disordered regions span residues 32–88 and 187–247; these read NNNN…NSDY and EKTT…RRQQ. Residues 233 to 244 show a composition bias toward basic and acidic residues; the sequence is EDEHQSLMESSR. A t-SNARE coiled-coil homology domain is found at 259–321; the sequence is NSIIQERDEG…KEGVNHLREA (63 aa). The helical; Anchor for type IV membrane protein transmembrane segment at 334–354 threads the bilayer; the sequence is WIVLILLIVCAVLGVILFFTL. Residues 355–356 are Vesicular-facing; the sequence is RK.

This sequence belongs to the syntaxin family. Component of the SNARE complex composed of syn7A, syn8A, vamp7A and vti1A. Interacts with nsfA, snpA and snpC.

It localises to the endosome membrane. Involved in the targeting and/or fusion of transport vesicles to their target membrane during transport of proteins from the early endosome to the lysosome. Required for fusion of late endosomes with lysosomes and homotypic lysosomal fusion. May be involved in protein trafficking from the plasma membrane to the early endosome (EE) as well as in homotypic fusion of endocytic organelles. This is Syntaxin-7A from Dictyostelium discoideum (Social amoeba).